The primary structure comprises 793 residues: Ferredoxin/F(420)H(2)-dependent CoB-CoM heterodisulfide reductase subunit A (793 aa).

147–170 (GGGVAGIEAALNLAEAGFPVTMVE) contacts FAD. 4 4Fe-4S ferredoxin-type domains span residues 233–264 (RKPRFVLEDKCKGCVDLCSGVCPVEIENPMNY), 282–311 (QVVLIDPDHCVGCGLCQLACPAEAVDYEQK), 571–600 (MGAHVDPDKCIGCRTCVEVCKFGKISIENK), and 601–629 (KAVVDEVSCYGCGDCSAACPVGAIQMRNF). [4Fe-4S] cluster contacts are provided by C243, C246, C250, C254, C291, C294, C297, C301, C580, C583, C586, C590, C609, C612, C615, and C619.

It belongs to the HdrA family. As to quaternary structure, the ferredoxin/F(420)H(2)-dependent CoB-CoM heterodisulfide reductase is composed of three subunits; HdrA2, HdrB2 and HdrC2. It depends on [4Fe-4S] cluster as a cofactor. [2Fe-2S] cluster serves as cofactor. FAD is required as a cofactor.

Its subcellular location is the cytoplasm. The enzyme catalyses coenzyme B + coenzyme M + 2 oxidized [2Fe-2S]-[ferredoxin] = coenzyme M-coenzyme B heterodisulfide + 2 reduced [2Fe-2S]-[ferredoxin] + 2 H(+). It catalyses the reaction coenzyme B + 2 oxidized coenzyme F420-(gamma-L-Glu)(n) + coenzyme M + 2 reduced [2Fe-2S]-[ferredoxin] + 4 H(+) = coenzyme M-coenzyme B heterodisulfide + 2 reduced coenzyme F420-(gamma-L-Glu)(n) + 2 oxidized [2Fe-2S]-[ferredoxin]. Its pathway is cofactor metabolism; coenzyme M-coenzyme B heterodisulfide reduction; coenzyme B and coenzyme M from coenzyme M-coenzyme B heterodisulfide: step 1/1. In terms of biological role, part of a complex that catalyzes the reversible reduction of CoM-S-S-CoB to the thiol-coenzymes H-S-CoM (coenzyme M) and H-S-CoB (coenzyme B). Catalyzes the transfer of electrons from ferredoxin to CoM-S-S-CoB during methanogenesis from acetate. Electrons transfer from ferredoxin to CoM-S-S-CoB via HdrA2, HdrC2 and HdrB2. In addition, the complex can use electron bifurcation to direct electron pairs from reduced coenzyme F420 towards the reduction of both ferredoxin and CoB-CoM heterodisulfide. This activity may take place during Fe(III)-dependent anaerobic methane oxidation. The polypeptide is Ferredoxin/F(420)H(2)-dependent CoB-CoM heterodisulfide reductase subunit A (Methanosarcina acetivorans (strain ATCC 35395 / DSM 2834 / JCM 12185 / C2A)).